The sequence spans 286 residues: uncharacterized protein (286 aa).

In terms of domain architecture, AB hydrolase-1 spans 26–268; that stretch reads PLIILCHGFC…DACHYDIYEG (243 aa).

Belongs to the AB hydrolase superfamily.

This is an uncharacterized protein from Escherichia coli.